A 288-amino-acid chain; its full sequence is Bifunctional protein FolD (288 aa).

Residues 166–168 (GAS) and I232 each bind NADP(+).

This sequence belongs to the tetrahydrofolate dehydrogenase/cyclohydrolase family. Homodimer.

It carries out the reaction (6R)-5,10-methylene-5,6,7,8-tetrahydrofolate + NADP(+) = (6R)-5,10-methenyltetrahydrofolate + NADPH. The catalysed reaction is (6R)-5,10-methenyltetrahydrofolate + H2O = (6R)-10-formyltetrahydrofolate + H(+). The protein operates within one-carbon metabolism; tetrahydrofolate interconversion. Catalyzes the oxidation of 5,10-methylenetetrahydrofolate to 5,10-methenyltetrahydrofolate and then the hydrolysis of 5,10-methenyltetrahydrofolate to 10-formyltetrahydrofolate. The polypeptide is Bifunctional protein FolD (Escherichia coli O139:H28 (strain E24377A / ETEC)).